Reading from the N-terminus, the 87-residue chain is Large ribosomal subunit protein bL28 (87 aa).

This sequence belongs to the bacterial ribosomal protein bL28 family.

This Methylacidiphilum infernorum (isolate V4) (Methylokorus infernorum (strain V4)) protein is Large ribosomal subunit protein bL28.